The chain runs to 499 residues: Maturase K (499 aa).

This sequence belongs to the intron maturase 2 family. MatK subfamily.

It localises to the plastid. It is found in the chloroplast. Its function is as follows. Usually encoded in the trnK tRNA gene intron. Probably assists in splicing its own and other chloroplast group II introns. The protein is Maturase K of Camellia sinensis (Tea plant).